The chain runs to 78 residues: Keratin-associated protein 6-5 (78 aa).

The interval 3–76 is 25 X 2 AA repeats of G-[YCGS]; the sequence is GYYGNYYGGR…GSGYGSGFGY (74 aa).

It belongs to the KRTAP type 6 family. In terms of assembly, interacts with hair keratins. Strong expression in narrowly defined pattern restricted to the lower and middle cortical regions of the hair shaft in both developing and cycling hair. During hair follicle regression (catagen), expression levels decrease until expression is no longer detectable in follicles at resting stage (telogen).

Functionally, in the hair cortex, hair keratin intermediate filaments are embedded in an interfilamentous matrix, consisting of hair keratin-associated proteins (KRTAP), which are essential for the formation of a rigid and resistant hair shaft through their extensive disulfide bond cross-linking with abundant cysteine residues of hair keratins. The matrix proteins include the high-sulfur and high-glycine-tyrosine keratins. This chain is Keratin-associated protein 6-5 (Krtap6-5), found in Mus musculus (Mouse).